Consider the following 760-residue polypeptide: Armadillo-like helical domain-containing protein 4 (760 aa).

The signal sequence occupies residues 1 to 27 (MSRPIVLHICLAFCSLLLLNFAAQCLA). Over 28–700 (FPNLERREIV…KDKAGYMSGM (673 aa)) the chain is Extracellular. Disordered stretches follow at residues 49-69 (LNTDDLENDSVTSNTPVSGDP), 117-143 (GEEVFGSSQPERMSPESRPSKATLTNP), 216-243 (RTEKFEANPEHKTTSFPGSKLTAGTEPS), 373-392 (HGGERASDQSSVTPTSPMGD), 474-495 (TRGEDETKGGRELPSATVDAPR), and 536-652 (NEEL…SQEP). N56 carries an N-linked (GlcNAc...) asparagine glycan. A compositionally biased stretch (basic and acidic residues) spans 216–228 (RTEKFEANPEHKT). Residues 380-390 (DQSSVTPTSPM) show a composition bias toward polar residues. Residues 474 to 484 (TRGEDETKGGR) are compositionally biased toward basic and acidic residues. A compositionally biased stretch (acidic residues) spans 594-635 (LESEEGEDDEDEEDEEEEDEEEEDEEEDEEDKDADSLDEALG). Residues 701–721 (LVPVGVGIAGALFILGALYSI) form a helical membrane-spanning segment. Residues 722–760 (KVMNRRRRNGFKRHKRKQREFNSMQDRVMLLADSSEDEF) lie on the Cytoplasmic side of the membrane. Phosphoserine is present on residues S755 and S756.

In terms of assembly, interacts with IL6ST; this interaction prevents IL6ST protein homodimerization and bridges ARMH4 with IL6R and STAT3 and therefore inhibits phosphorylation of STAT3 at 'Tyr-705'. Interacts (via cytoplasmic tail) with RICTOR; this interaction bridges ARMH4 to the mTORC2 complex and inhibits the mTORC2 kinase activity.

It localises to the membrane. May modulate immune response and may play a role in inflammation. Down-modulates STAT3 signaling throught direct interaction with IL6ST, resulting in the inhibition of phosphorylation of STAT3 at Tyr-705. May negatively regulates AKT signaling by modulating the activity of mTORC2 complex through RICTOR interaction. In Bos taurus (Bovine), this protein is Armadillo-like helical domain-containing protein 4.